The sequence spans 504 residues: Flavin-dependent halogenase armH3 (504 aa).

G16, A19, E49, and A149 together coordinate FAD. Residues S329 and G330 each coordinate chloride. I331 contacts FAD. The interval 444–475 is disordered; it reads NNLRTPVDTGAADVKAKHAPSETDAQNPLQSM.

This sequence belongs to the flavin-dependent halogenase family.

The catalysed reaction is melleolide F + FADH2 + chloride + O2 = 6'-chloromelleolide F + FAD + 2 H2O + H(+). In terms of biological role, flavin-dependent halogenase involved in the biosynthesis of melleolides, a range of antifungal and phytotoxic polyketide derivatives composed of an orsellinic acid (OA) moiety esterified to various sesquiterpene alcohols. The halogenase catalyzes the transfer of a single chlorine atom to the melleolide backbone, resulting in a 6'-chloromelleolide product. The enzyme acts on free substrate and does not depend on carrier-protein-dependent acceptor molecules. In Armillaria mellea (Honey mushroom), this protein is Flavin-dependent halogenase armH3.